The following is a 277-amino-acid chain: MMDFWTAFQAIILGVVEGLTEFLPISSTGHQIIVADLIGFGGERAMAFNIIIQLAAILAVVWEFRSKIFEVVFGLTNQPKARRFTGNLLLAFMPAVVLGVLFADLIHEYLFNPVTVAAALVVGGVIMLWAERREHRVEVDHVDDMRWSHALKIGFIQCLAMIPGTSRSGSTIIGGLLFGLSRKAATEFSFFLAMPTMVGAAVYSGYKYRDLFQPGDLPVFALGFVTSFIFAMIAVRALLKFIANHSYAAFAWYRIVFGLFILATWQFGWVDWSTAHG.

6 consecutive transmembrane segments (helical) span residues 44–64 (RAMAFNIIIQLAAILAVVWEF), 86–106 (GNLLLAFMPAVVLGVLFADLI), 110–130 (LFNPVTVAAALVVGGVIMLWA), 184–204 (AATEFSFFLAMPTMVGAAVYS), 215–235 (GDLPVFALGFVTSFIFAMIAV), and 250–270 (FAWYRIVFGLFILATWQFGWV).

This sequence belongs to the UppP family.

The protein localises to the cell inner membrane. It catalyses the reaction di-trans,octa-cis-undecaprenyl diphosphate + H2O = di-trans,octa-cis-undecaprenyl phosphate + phosphate + H(+). In terms of biological role, catalyzes the dephosphorylation of undecaprenyl diphosphate (UPP). Confers resistance to bacitracin. This chain is Undecaprenyl-diphosphatase, found in Pseudomonas putida (strain ATCC 47054 / DSM 6125 / CFBP 8728 / NCIMB 11950 / KT2440).